Consider the following 1082-residue polypeptide: Inner tegument protein (1082 aa).

The segment at Asp-604–Phe-1082 is interaction with large tegument protein.

The protein belongs to the herpesviridae inner tegument protein family. In terms of assembly, interacts (via C-terminus) with the large tegument protein/LTP (via N-terminus).

It localises to the virion tegument. The protein localises to the host cytoplasm. The protein resides in the host nucleus. Its subcellular location is the host Golgi apparatus. It is found in the host trans-Golgi network. Its function is as follows. Plays an essential role in cytoplasmic secondary envelopment during viral egress. Interacts with the capsid via the large tegument protein/LTP and participates in its transport to the host trans-Golgi network (TGN) where secondary envelopment occurs. Modulates tegumentation and capsid accumulation at the viral assembly complex. The polypeptide is Inner tegument protein (U30) (Homo sapiens (Human)).